Reading from the N-terminus, the 118-residue chain is Beta-2-microglobulin (118 aa).

The first 20 residues, 1–20 (MAVSAALVLLGLLSLSGLDA), serve as a signal peptide directing secretion. The Ig-like C1-type domain maps to 25–112 (PEVQVYSRHP…HVTLTQPKIV (88 aa)). Cys45 and Cys99 are disulfide-bonded.

The protein belongs to the beta-2-microglobulin family. Heterodimer of an alpha chain and a beta chain. Beta-2-microglobulin is the beta-chain of major histocompatibility complex class I molecules.

The protein resides in the secreted. In terms of biological role, component of the class I major histocompatibility complex (MHC). Involved in the presentation of peptide antigens to the immune system. The sequence is that of Beta-2-microglobulin (B2M) from Ovis aries (Sheep).